The following is a 920-amino-acid chain: Isoleucine--tRNA ligase (920 aa).

The 'HIGH' region signature appears at 58–68; that stretch reads PYANGHLHLGH. Glu569 contributes to the L-isoleucyl-5'-AMP binding site. The 'KMSKS' region signature appears at 610-614; the sequence is KMSKS. Residue Lys613 participates in ATP binding. Residues Cys895, Cys898, Cys910, and Cys913 each contribute to the Zn(2+) site.

This sequence belongs to the class-I aminoacyl-tRNA synthetase family. IleS type 1 subfamily. Monomer. Zn(2+) is required as a cofactor.

Its subcellular location is the cytoplasm. The catalysed reaction is tRNA(Ile) + L-isoleucine + ATP = L-isoleucyl-tRNA(Ile) + AMP + diphosphate. Functionally, catalyzes the attachment of isoleucine to tRNA(Ile). As IleRS can inadvertently accommodate and process structurally similar amino acids such as valine, to avoid such errors it has two additional distinct tRNA(Ile)-dependent editing activities. One activity is designated as 'pretransfer' editing and involves the hydrolysis of activated Val-AMP. The other activity is designated 'posttransfer' editing and involves deacylation of mischarged Val-tRNA(Ile). The sequence is that of Isoleucine--tRNA ligase from Helicobacter pylori (strain G27).